The following is a 323-amino-acid chain: Polycomb complex protein BMI-1-B (323 aa).

An RING-type zinc finger spans residues 18-57 (CVLCGGYFIDAATIIECLHSFCKTCIVRYLETSKYCPICD). The Nuclear localization signal signature appears at 81-95 (KLVPGLFKGEMKRRR). Residues 238-310 (PHTDRINNTS…HQNPFANRAR (73 aa)) form a disordered region. Low complexity predominate over residues 287–301 (HISSTINGTNSSSSH).

Component of a PRC1-like complex. Interacts with cbx4.

It localises to the nucleus. Component of a Polycomb group (PcG) multiprotein PRC1-like complex, a complex class required to maintain the transcriptionally repressive state of many genes, including Hox genes, throughout development. PcG PRC1 complex acts via chromatin remodeling and modification of histones; it mediates monoubiquitination of histone H2A 'Lys-119', rendering chromatin heritably changed in its expressibility. In the PRC1 complex, it is required to stimulate the E3 ubiquitin-protein ligase activity of rnf2. The polypeptide is Polycomb complex protein BMI-1-B (bmi1b) (Xenopus laevis (African clawed frog)).